The primary structure comprises 151 residues: NADPH-dependent 7-cyano-7-deazaguanine reductase (151 aa).

Catalysis depends on Cys49, which acts as the Thioimide intermediate. The active-site Proton donor is the Asp56. Substrate is bound by residues 71-73 (IES) and 90-91 (HE).

It belongs to the GTP cyclohydrolase I family. QueF type 1 subfamily.

The protein localises to the cytoplasm. It catalyses the reaction 7-aminomethyl-7-carbaguanine + 2 NADP(+) = 7-cyano-7-deazaguanine + 2 NADPH + 3 H(+). Its pathway is tRNA modification; tRNA-queuosine biosynthesis. Its function is as follows. Catalyzes the NADPH-dependent reduction of 7-cyano-7-deazaguanine (preQ0) to 7-aminomethyl-7-deazaguanine (preQ1). This chain is NADPH-dependent 7-cyano-7-deazaguanine reductase, found in Caulobacter vibrioides (strain ATCC 19089 / CIP 103742 / CB 15) (Caulobacter crescentus).